The primary structure comprises 445 residues: Phosphoglucosamine mutase (445 aa).

Residue serine 101 is the Phosphoserine intermediate of the active site. Residues serine 101, aspartate 240, aspartate 242, and aspartate 244 each coordinate Mg(2+). Serine 101 is subject to Phosphoserine.

The protein belongs to the phosphohexose mutase family. Requires Mg(2+) as cofactor. Post-translationally, activated by phosphorylation.

The enzyme catalyses alpha-D-glucosamine 1-phosphate = D-glucosamine 6-phosphate. Its function is as follows. Catalyzes the conversion of glucosamine-6-phosphate to glucosamine-1-phosphate. This is Phosphoglucosamine mutase from Ectopseudomonas mendocina (strain ymp) (Pseudomonas mendocina).